Reading from the N-terminus, the 264-residue chain is 1H-3-hydroxy-4-oxoquinoline 2,4-dioxygenase (264 aa).

Residues 30-32, 94-95, and tryptophan 153 contribute to the substrate site; these read WCQ and TS. Histidine 244 (proton donor/acceptor) is an active-site residue.

It belongs to the AB hydrolase superfamily. None. Contrary to most other dioxygenases, this enzyme does not require a cofactor for catalysis. is required as a cofactor.

The enzyme catalyses 3-hydroxy-1H-quinolin-4-one + O2 = N-formylanthranilate + CO + H(+). Functionally, ring-cleaving dioxygenase involved in oxoquinoline degradation and utilization. The sequence is that of 1H-3-hydroxy-4-oxoquinoline 2,4-dioxygenase (qdo) from Pseudomonas putida (Arthrobacter siderocapsulatus).